Reading from the N-terminus, the 299-residue chain is Phosphoribosylaminoimidazole-succinocarboxamide synthase (299 aa).

This sequence belongs to the SAICAR synthetase family.

The enzyme catalyses 5-amino-1-(5-phospho-D-ribosyl)imidazole-4-carboxylate + L-aspartate + ATP = (2S)-2-[5-amino-1-(5-phospho-beta-D-ribosyl)imidazole-4-carboxamido]succinate + ADP + phosphate + 2 H(+). It participates in purine metabolism; IMP biosynthesis via de novo pathway; 5-amino-1-(5-phospho-D-ribosyl)imidazole-4-carboxamide from 5-amino-1-(5-phospho-D-ribosyl)imidazole-4-carboxylate: step 1/2. The sequence is that of Phosphoribosylaminoimidazole-succinocarboxamide synthase from Desulfatibacillum aliphaticivorans.